Consider the following 555-residue polypeptide: Formate--tetrahydrofolate ligase (555 aa).

T65–S72 is an ATP binding site.

This sequence belongs to the formate--tetrahydrofolate ligase family.

The catalysed reaction is (6S)-5,6,7,8-tetrahydrofolate + formate + ATP = (6R)-10-formyltetrahydrofolate + ADP + phosphate. The protein operates within one-carbon metabolism; tetrahydrofolate interconversion. In Staphylococcus aureus (strain NCTC 8325 / PS 47), this protein is Formate--tetrahydrofolate ligase.